The primary structure comprises 317 residues: D-alanine--D-alanine ligase (317 aa).

An ATP-grasp domain is found at 103 to 299 (KHIFRSLNID…FNELVKIIIE (197 aa)). 130-183 (KIDYPYVLKPINEGSSIGVYIIFSHEDYLELKDNSSTIMEKMIVEEYIPGIELH) contributes to the ATP binding site. Residues D251, E265, and N267 each coordinate Mg(2+).

The protein belongs to the D-alanine--D-alanine ligase family. The cofactor is Mg(2+). It depends on Mn(2+) as a cofactor.

The protein resides in the cytoplasm. The enzyme catalyses 2 D-alanine + ATP = D-alanyl-D-alanine + ADP + phosphate + H(+). The protein operates within cell wall biogenesis; peptidoglycan biosynthesis. Its function is as follows. Cell wall formation. In Wolbachia sp. subsp. Drosophila simulans (strain wRi), this protein is D-alanine--D-alanine ligase.